Consider the following 992-residue polypeptide: Disks large-associated protein 1 (992 aa).

Disordered regions lie at residues 150–209 (TKSH…SWWS) and 355–376 (KAMGDEDSGDSDTSPKPSPKVA). Serine 169 carries the post-translational modification Phosphoserine. Over residues 194 to 209 (RSNASNASPTSPSWWS) the composition is skewed to low complexity. Phosphoserine occurs at positions 362, 365, 368, 372, 389, 418, 421, 425, 428, 437, 509, 516, and 578. Threonine 579 carries the phosphothreonine modification. 2 positions are modified to phosphoserine: serine 581 and serine 605. Threonine 606 is subject to Phosphothreonine. Serine 608 and serine 611 each carry phosphoserine. Interaction with DYL2 regions lie at residues 665-676 (LSIGIQVDDAEE) and 687-698 (NKFQSVGVQVEE). The interval 914-980 (WKQMDPLDKK…QNSATESAES (67 aa)) is disordered. Basic and acidic residues-rich tracts occupy residues 918-927 (DPLDKKERRA) and 943-958 (IRERSLESSQRQEARK). Phosphoserine is present on serine 947. The span at 969–978 (VRQNSATESA) shows a compositional bias: polar residues. The PDZ-binding motif lies at 990–992 (TRL).

Belongs to the SAPAP family. As to quaternary structure, interacts with the guanylate kinase-like domain of DLG1, DLG2, DLG3, DLG4 and AIP1. Interacts with the PDZ domain of SHANK1, SHANK2 and SHANK3. Found in a complex with DLG4 and SHANK1, SHANK2 or SHANK3. Found in a complex with DLG4 and BEGAIN. Interacts with DYL2 and LRFN1. Interacts with MPP2 (via the SH3-Guanylate kinase-like sub-module). In terms of processing, ubiquitinated by TRIM3; leading to proteasomal degradation. In terms of tissue distribution, highest levels in the neocortex, part of the hippocampus, the granule cell layer of the cerebellum, the glomerular layer of the olfactory bulb, the inner plexiform layer of the retina, the ventral and dorsal horn of the spinal cord, the neuromuscular junction and the submandibular ganglion.

The protein localises to the cell membrane. It is found in the postsynaptic density. It localises to the synapse. Functionally, part of the postsynaptic scaffold in neuronal cells. The chain is Disks large-associated protein 1 (Dlgap1) from Mus musculus (Mouse).